A 207-amino-acid chain; its full sequence is Large ribosomal subunit protein uL4 (207 aa).

This sequence belongs to the universal ribosomal protein uL4 family. In terms of assembly, part of the 50S ribosomal subunit.

One of the primary rRNA binding proteins, this protein initially binds near the 5'-end of the 23S rRNA. It is important during the early stages of 50S assembly. It makes multiple contacts with different domains of the 23S rRNA in the assembled 50S subunit and ribosome. Functionally, forms part of the polypeptide exit tunnel. This is Large ribosomal subunit protein uL4 from Rickettsia rickettsii (strain Iowa).